The primary structure comprises 783 residues: Tricorn protease-interacting factor F2 (783 aa).

Residues Glu107 and Gly236 to Asn240 contribute to the substrate site. His271 lines the Zn(2+) pocket. The active-site Proton acceptor is the Glu272. Zn(2+) is bound by residues His275 and Glu294.

The protein belongs to the peptidase M1 family. Monomer. Part of the Tricorn proteolytic complex. Zn(2+) serves as cofactor.

Its subcellular location is the cytoplasm. Functionally, proteases F1, F2 and F3 degrade oligopeptides produced by Tricorn (themselves probably produced by the proteasome), yielding free amino acids. The polypeptide is Tricorn protease-interacting factor F2 (trf2) (Thermoplasma volcanium (strain ATCC 51530 / DSM 4299 / JCM 9571 / NBRC 15438 / GSS1)).